Here is a 303-residue protein sequence, read N- to C-terminus: Probable cell division protein WhiA (303 aa).

The segment at residues 272–303 is a DNA-binding region (H-T-H motif); the sequence is SIQQIADSLETPLSKSGVNHRLRKINKIADEL.

This sequence belongs to the WhiA family.

Functionally, involved in cell division and chromosome segregation. The sequence is that of Probable cell division protein WhiA from Streptococcus agalactiae serotype Ia (strain ATCC 27591 / A909 / CDC SS700).